A 358-amino-acid chain; its full sequence is Reverse gyrase subunit A (358 aa).

A Topo IA-type catalytic domain is found at 1–351; that stretch reads MNATLRIRNR…KLYLELERVV (351 aa). Tyr-78 acts as the O-(5'-phospho-DNA)-tyrosine intermediate in catalysis.

It belongs to the type IA topoisomerase family. As to quaternary structure, heterodimer of an RgyrA and RgyrB subunit. The topoisomerase domain is shared between the two subunits. The cofactor is Mg(2+).

The protein resides in the cytoplasm. Functionally, modifies the topological state of DNA by introducing positive supercoils in an ATP-dependent process; dATP also allows positive supercoiling. Increases the linking number in steps of +1. Only this subunit binds DNA, in isolation it does not hydrolyze ATP. Hydrolyzes ATP only in the presence of DNA. Transiently cleaves a single DNA strand and remains covalently bound to the 5' DNA end probably through a tyrosine residue. It changes linking number in steps of one, and nicks DNA preferentially at 5'-CNNN | 3'-sites with a strong preference for 4 pyrimidine residues. There are about 1000 heterodimers per cell. May be involved in rewinding the DNA strands in the regions of the chromosome that have opened up to allow transcription or replication. Reverse gyrase activity is reconstituted after incubation at 80 degrees Celsius for 5 minutes, positive supercoiling requires ATP and Mg(2+). In the presence of ATP it binds and nicks substrate but does not make closed product. The sequence is that of Reverse gyrase subunit A from Methanopyrus kandleri (strain AV19 / DSM 6324 / JCM 9639 / NBRC 100938).